Reading from the N-terminus, the 147-residue chain is Ribosome-binding factor A (147 aa).

The segment at glutamine 122 to valine 147 is disordered. A compositionally biased stretch (acidic residues) spans valine 128–valine 147.

This sequence belongs to the RbfA family. Monomer. Binds 30S ribosomal subunits, but not 50S ribosomal subunits or 70S ribosomes.

The protein localises to the cytoplasm. Functionally, one of several proteins that assist in the late maturation steps of the functional core of the 30S ribosomal subunit. Associates with free 30S ribosomal subunits (but not with 30S subunits that are part of 70S ribosomes or polysomes). Required for efficient processing of 16S rRNA. May interact with the 5'-terminal helix region of 16S rRNA. The sequence is that of Ribosome-binding factor A from Shewanella oneidensis (strain ATCC 700550 / JCM 31522 / CIP 106686 / LMG 19005 / NCIMB 14063 / MR-1).